A 498-amino-acid polypeptide reads, in one-letter code: Cystathionine beta-synthase (498 aa).

Positions 1–25 are disordered; the sequence is MSAPEGPSKCTWTPNTTENTPHTTR. Over residues 11–22 the composition is skewed to low complexity; it reads TWTPNTTENTPH. N6-(pyridoxal phosphate)lysine is present on Lys-73. Pyridoxal 5'-phosphate contacts are provided by residues Asn-103, 210-214, and Ser-302; that span reads GTGGT. CBS domains follow at residues 374–430 and 435–497; these read TLPK…KKAV and VSKV…SQQK.

This sequence belongs to the cysteine synthase/cystathionine beta-synthase family. Requires pyridoxal 5'-phosphate as cofactor.

It catalyses the reaction L-homocysteine + L-serine = L,L-cystathionine + H2O. The protein operates within amino-acid biosynthesis; L-cysteine biosynthesis; L-cysteine from L-homocysteine and L-serine: step 1/2. This chain is Cystathionine beta-synthase (cysB), found in Dictyostelium discoideum (Social amoeba).